The sequence spans 283 residues: Circadian clock oscillator protein KaiA (283 aa).

The tract at residues M1–S146 is psR domain, not required to form KaiA:KaiB:KaiC complex, or for a full KaiC phosphorylation cycle. Residues Q3–L163 enclose the KaiA N-terminal domain. Positions G164–R172 are flexible linker. The KaiA C-terminal domain occupies D173–R281.

Belongs to the KaiA family. As to quaternary structure, homodimer. The KaiABC complex composition changes during the circadian cycle to control KaiC phosphorylation. Complexes KaiC(6), KaiA(2-4):KaiC(6), KaiB(6):KaiC(6) and KaiC(6):KaiB(6):KaiA(12) are among the most important forms, many form cooperatively. Binds to KaiB and KaiC, the N-terminus (pseudoreceiver domain PsR) is not required for either interaction. 1 KaiB binds to one subunit of the KaiA homodimer. KaiA and CikA bind to the same region of the KaiB(fs) form and therefore compete.

Key component of the KaiABC oscillator complex, which constitutes the main circadian regulator in cyanobacteria. Complex composition changes during the circadian cycle to control KaiC phosphorylation. KaiA stimulates KaiC autophosphorylation, while KaiB sequesters KaiA, leading to KaiC autodephosphorylation. KaiA binding to the KaiC CII domain during the subjective day yields KaiA(2-4):KaiC(6) complexes which stimulate KaiC autophosphorylation. Phospho-Ser-431 KaiC accumulation triggers binding of KaiB during the subjective night to form the KaiB(6):KaiC(6) complex, leading to changes in the output regulators CikA and SasA. KaiB(6):KaiC(6) formation exposes a site for KaiA binding on KaiB that sequesters KaiA from KaiC's CII domain, making the KaiC(6):KaiB(6):KaiA(12) complex resulting in KaiC autodephosphorylation. Complete dephosphorylation of KaiC leads to dissociation of KaiA(2):KaiB(1), completing 1 cycle of the Kai oscillator. Formation of the KaiB:KaiC complex is promoted by KaiA, helping switch KaiC from its autophosphorylation to autodephosphatase function. Functionally, binds oxidized quinones via the N-terminal PsR domain, allowing it to sense redox changes and possibly mediate clock input. The protein is Circadian clock oscillator protein KaiA of Thermosynechococcus vestitus (strain NIES-2133 / IAM M-273 / BP-1).